The following is a 706-amino-acid chain: Sodium- and chloride-dependent glycine transporter 1 (706 aa).

The disordered stretch occupies residues 1-26 (MSGGDTRAAIARPRMAAAHGPVAPSS). The Cytoplasmic portion of the chain corresponds to 1-108 (MSGGDTRAAI…KRGNWGNQIE (108 aa)). Positions 7–18 (RAAIARPRMAAA) are enriched in low complexity. 3 helical membrane passes run 109–129 (FVLT…FPYL), 136–156 (GAFM…LFFM), and 188–208 (VSTY…YYFF). Residues 209 to 285 (SSMTHVLPWA…LSDDIGNFGE (77 aa)) lie on the Extracellular side of the membrane. The next 9 membrane-spanning stretches (helical) occupy residues 286–306 (VRLP…LCLI), 315–335 (VVYF…VRGV), 360–380 (VWGD…GGLI), 407–427 (SVYA…HLGV), 450–470 (LLPI…LLGL), 506–526 (VAGF…WLLL), 530–550 (YAAS…IMYI), 570–590 (LFFQ…ILVF), and 610–630 (VAIG…YAMF). The Cytoplasmic portion of the chain corresponds to 631–706 (RLCRTDGDTL…GSSRLQDSRI (76 aa)). Phosphoserine occurs at positions 673 and 698. Residues 695-706 (SNGSSRLQDSRI) are essential for interaction with EXOC1.

The protein belongs to the sodium:neurotransmitter symporter (SNF) (TC 2.A.22) family. SLC6A9 subfamily. Interacts with EXOC1; interaction increases the transporter capacity of SLC6A9 probably by promoting its insertion into the cell membrane. Interacts with EXOC3 and EXOC4. Expressed in the brain, kidney, pancreas, lung, placenta and liver. As to expression, expressed only in the brain.

The protein localises to the cell membrane. It catalyses the reaction glycine(out) + chloride(out) + 2 Na(+)(out) = glycine(in) + chloride(in) + 2 Na(+)(in). Its activity is regulated as follows. Inhibited by sarcosine. Its function is as follows. Sodium- and chloride-dependent glycine transporter. Essential for regulating glycine concentrations at inhibitory glycinergic synapses. Functionally, sodium- and chloride-dependent glycine transporter. This chain is Sodium- and chloride-dependent glycine transporter 1 (SLC6A9), found in Homo sapiens (Human).